A 389-amino-acid polypeptide reads, in one-letter code: Dihydroorotase (389 aa).

Positions 51 and 53 each coordinate Zn(2+). Substrate is bound by residues 53-55 and Asn-85; that span reads HVR. Residues Lys-133, His-158, His-193, and Asp-256 each coordinate Zn(2+). Position 133 is an N6-carboxylysine (Lys-133). Residue Asp-256 is part of the active site. Residues His-260 and 274–275 contribute to the substrate site; that span reads PG.

It belongs to the metallo-dependent hydrolases superfamily. DHOase family. Class I DHOase subfamily. Zn(2+) serves as cofactor.

The catalysed reaction is (S)-dihydroorotate + H2O = N-carbamoyl-L-aspartate + H(+). It participates in pyrimidine metabolism; UMP biosynthesis via de novo pathway; (S)-dihydroorotate from bicarbonate: step 3/3. Functionally, catalyzes the reversible cyclization of carbamoyl aspartate to dihydroorotate. This Sulfolobus acidocaldarius (strain ATCC 33909 / DSM 639 / JCM 8929 / NBRC 15157 / NCIMB 11770) protein is Dihydroorotase.